A 253-amino-acid chain; its full sequence is Low affinity immunoglobulin gamma Fc region receptor III-B (253 aa).

Positions 1-20 are cleaved as a signal peptide; the sequence is MGQPLPPVALLLLVSASSRA. The Extracellular portion of the chain corresponds to 21–207; sequence ADVPKALVLL…VSSSVLPWHQ (187 aa). 2 Ig-like C2-type domains span residues 24–105 and 120–189; these read PKAL…LRVH and EGEP…VTIT. Cystine bridges form between Cys-47-Cys-89 and Cys-128-Cys-172. N-linked (GlcNAc...) asparagine glycosylation is found at Asn-56, Asn-63, Asn-165, and Asn-180. The chain crosses the membrane as a helical span at residues 208-226; it reads IAFCLVMGLLLAADTGLYF. Topologically, residues 227–253 are cytoplasmic; it reads SVQRDLRSSQRARKEHTLGWSLGSQDK.

Forms a heterooligomeric complex with ITAM-containing signaling subunits FCER1G. Interacts (via transmembrane domain) with signaling subunits; this interaction is a prerequisite for receptor complex expression on the cell surface and intracellular signal transduction. Binds the Fc region of antigen-complexed IgG.

The protein localises to the cell membrane. Receptor for the invariable Fc fragment of immunoglobulin gamma (IgG). Optimally activated upon binding of clustered antigen-IgG complexes displayed on cell surfaces, triggers lysis of antibody-coated cells, a process known as antibody-dependent cellular cytotoxicity (ADCC). Does not bind free monomeric IgG, thus avoiding inappropriate effector cell activation in the absence of antigenic trigger. Mediates IgG effector functions on natural killer (NK) cells. Binds antigen-IgG complexes generated upon infection and triggers NK cell-dependent cytokine production and degranulation to limit viral load and propagation. Fc-binding subunit that associates with FCER1G adapters to form functional signaling complexes. Following the engagement of antigen-IgG complexes, triggers phosphorylation of immunoreceptor tyrosine-based activation motif (ITAM)-containing adapters with subsequent activation of phosphatidylinositol 3-kinase signaling and sustained elevation of intracellular calcium that ultimately drive NK cell activation. Mediates enhanced ADCC in response to afucosylated IgGs. In Oryctolagus cuniculus (Rabbit), this protein is Low affinity immunoglobulin gamma Fc region receptor III-B (FCGR3B).